The sequence spans 104 residues: Replication restart protein PriB (104 aa).

Positions 1–101 constitute an SSB domain; the sequence is MTNRLELSGI…LHAEQIELID (101 aa).

The protein belongs to the PriB family. Homodimer. Interacts with DnaT. Interacts with PriA. Component of the replication restart primosome. Primosome assembly occurs via a 'hand-off' mechanism. PriA binds to replication forks, subsequently PriB then DnaT bind; DnaT then displaces ssDNA to generate the helicase loading substrate.

In terms of biological role, involved in the restart of stalled replication forks, which reloads the replicative helicase on sites far from the origin of replication; the PriA-PriB pathway is the major replication restart pathway. During primosome assembly it facilitates complex formation between PriA and DnaT on DNA; stabilizes PriA on DNA. Stimulates the DNA unwinding activity of PriA helicase. Its function is as follows. Binds single-stranded (ss)DNA at the primosome assembly site (PAS). One study finds it binds 15 nucleotide (nt) ssDNA. Another study finds the minimal ssDNA length for binding to PriB is 25 nt; prefers dT(30) over dA(30). Also binds 22 nt dsDNA. In Klebsiella pneumoniae subsp. pneumoniae (strain ATCC 700721 / MGH 78578), this protein is Replication restart protein PriB.